We begin with the raw amino-acid sequence, 29 residues long: Inorganic pyrophosphatase (29 aa).

The protein resides in the periplasm. It carries out the reaction diphosphate + H2O = 2 phosphate + H(+). Functionally, inorganic pyrophosphatase is an essential enzyme for the activation of sulfate by sulfate reducing bacteria. This is a high activity pyrophosphatase. In Nitratidesulfovibrio vulgaris (strain ATCC 29579 / DSM 644 / CCUG 34227 / NCIMB 8303 / VKM B-1760 / Hildenborough) (Desulfovibrio vulgaris), this protein is Inorganic pyrophosphatase.